The chain runs to 465 residues: Ribulose bisphosphate carboxylase large chain (465 aa).

Lysine 4 bears the N6,N6,N6-trimethyllysine mark. The substrate site is built by asparagine 113 and threonine 163. The active-site Proton acceptor is lysine 165. Lysine 167 contacts substrate. Residues lysine 191, aspartate 193, and glutamate 194 each contribute to the Mg(2+) site. Lysine 191 bears the N6-carboxylysine mark. The Proton acceptor role is filled by histidine 284. 3 residues coordinate substrate: arginine 285, histidine 317, and serine 369.

Belongs to the RuBisCO large chain family. Type I subfamily. Heterohexadecamer of 8 large chains and 8 small chains; disulfide-linked. The disulfide link is formed within the large subunit homodimers. Mg(2+) is required as a cofactor. In terms of processing, the disulfide bond which can form in the large chain dimeric partners within the hexadecamer appears to be associated with oxidative stress and protein turnover.

The protein resides in the plastid. The protein localises to the chloroplast. It catalyses the reaction 2 (2R)-3-phosphoglycerate + 2 H(+) = D-ribulose 1,5-bisphosphate + CO2 + H2O. The enzyme catalyses D-ribulose 1,5-bisphosphate + O2 = 2-phosphoglycolate + (2R)-3-phosphoglycerate + 2 H(+). RuBisCO catalyzes two reactions: the carboxylation of D-ribulose 1,5-bisphosphate, the primary event in carbon dioxide fixation, as well as the oxidative fragmentation of the pentose substrate in the photorespiration process. Both reactions occur simultaneously and in competition at the same active site. The protein is Ribulose bisphosphate carboxylase large chain of Securidaca diversifolia (Easter flower).